The sequence spans 460 residues: Bifunctional protein GlmU (460 aa).

The interval 1–229 (MTNYAIILAA…FNESLGVNDR (229 aa)) is pyrophosphorylase. Residues 8-11 (LAAG), Lys22, Gln72, and 77-78 (GT) contribute to the UDP-N-acetyl-alpha-D-glucosamine site. Position 102 (Asp102) interacts with Mg(2+). Residues Gly139, Glu154, Asn169, and Asn227 each contribute to the UDP-N-acetyl-alpha-D-glucosamine site. Asn227 contacts Mg(2+). Positions 230–250 (VALATAETVMRQRITQKHMVN) are linker. The tract at residues 251–460 (GVTFHNPETV…RLAHHPSRSK (210 aa)) is N-acetyltransferase. UDP-N-acetyl-alpha-D-glucosamine is bound by residues Arg332 and Lys350. The active-site Proton acceptor is the His362. Positions 365 and 376 each coordinate UDP-N-acetyl-alpha-D-glucosamine. Acetyl-CoA contacts are provided by residues Ala379, 385-386 (NY), Ser404, Ala422, and Arg439.

This sequence in the N-terminal section; belongs to the N-acetylglucosamine-1-phosphate uridyltransferase family. It in the C-terminal section; belongs to the transferase hexapeptide repeat family. As to quaternary structure, homotrimer. It depends on Mg(2+) as a cofactor.

It is found in the cytoplasm. It carries out the reaction alpha-D-glucosamine 1-phosphate + acetyl-CoA = N-acetyl-alpha-D-glucosamine 1-phosphate + CoA + H(+). It catalyses the reaction N-acetyl-alpha-D-glucosamine 1-phosphate + UTP + H(+) = UDP-N-acetyl-alpha-D-glucosamine + diphosphate. Its pathway is nucleotide-sugar biosynthesis; UDP-N-acetyl-alpha-D-glucosamine biosynthesis; N-acetyl-alpha-D-glucosamine 1-phosphate from alpha-D-glucosamine 6-phosphate (route II): step 2/2. The protein operates within nucleotide-sugar biosynthesis; UDP-N-acetyl-alpha-D-glucosamine biosynthesis; UDP-N-acetyl-alpha-D-glucosamine from N-acetyl-alpha-D-glucosamine 1-phosphate: step 1/1. It participates in bacterial outer membrane biogenesis; LPS lipid A biosynthesis. Functionally, catalyzes the last two sequential reactions in the de novo biosynthetic pathway for UDP-N-acetylglucosamine (UDP-GlcNAc). The C-terminal domain catalyzes the transfer of acetyl group from acetyl coenzyme A to glucosamine-1-phosphate (GlcN-1-P) to produce N-acetylglucosamine-1-phosphate (GlcNAc-1-P), which is converted into UDP-GlcNAc by the transfer of uridine 5-monophosphate (from uridine 5-triphosphate), a reaction catalyzed by the N-terminal domain. This chain is Bifunctional protein GlmU, found in Streptococcus pyogenes serotype M49 (strain NZ131).